Consider the following 232-residue polypeptide: 2-C-methyl-D-erythritol 4-phosphate cytidylyltransferase (232 aa).

It belongs to the IspD/TarI cytidylyltransferase family. IspD subfamily.

It carries out the reaction 2-C-methyl-D-erythritol 4-phosphate + CTP + H(+) = 4-CDP-2-C-methyl-D-erythritol + diphosphate. The protein operates within isoprenoid biosynthesis; isopentenyl diphosphate biosynthesis via DXP pathway; isopentenyl diphosphate from 1-deoxy-D-xylulose 5-phosphate: step 2/6. Its function is as follows. Catalyzes the formation of 4-diphosphocytidyl-2-C-methyl-D-erythritol from CTP and 2-C-methyl-D-erythritol 4-phosphate (MEP). This Shewanella frigidimarina (strain NCIMB 400) protein is 2-C-methyl-D-erythritol 4-phosphate cytidylyltransferase.